A 195-amino-acid polypeptide reads, in one-letter code: Glycerol-3-phosphate acyltransferase (195 aa).

The next 5 helical transmembrane spans lie at 3 to 23 (IHAVVIVLSYLIGSIPFGLIL), 53 to 73 (AVMTLLLDAVKGLISVLLAKI), 80 to 100 (FAFISAMFSIIGHMFPVWLLF), 115 to 135 (LIEYKFVICFLFIWITLFAIF), and 147 to 167 (IFVALLVYMYYTMNDTAVFIA).

The protein belongs to the PlsY family. As to quaternary structure, probably interacts with PlsX.

The protein localises to the cell inner membrane. It catalyses the reaction an acyl phosphate + sn-glycerol 3-phosphate = a 1-acyl-sn-glycero-3-phosphate + phosphate. It functions in the pathway lipid metabolism; phospholipid metabolism. Functionally, catalyzes the transfer of an acyl group from acyl-phosphate (acyl-PO(4)) to glycerol-3-phosphate (G3P) to form lysophosphatidic acid (LPA). This enzyme utilizes acyl-phosphate as fatty acyl donor, but not acyl-CoA or acyl-ACP. The chain is Glycerol-3-phosphate acyltransferase from Ehrlichia chaffeensis (strain ATCC CRL-10679 / Arkansas).